The primary structure comprises 345 residues: Anthranilate phosphoribosyltransferase (345 aa).

5-phospho-alpha-D-ribose 1-diphosphate-binding positions include Gly81, 84–85 (GD), Ser89, 91–94 (NVST), 109–117 (KHGNRAATS), and Ala121. An anthranilate-binding site is contributed by Gly81. Ser93 contributes to the Mg(2+) binding site. Asn112 provides a ligand contact to anthranilate. Arg167 contributes to the anthranilate binding site. Mg(2+) is bound by residues Asp226 and Glu227.

The protein belongs to the anthranilate phosphoribosyltransferase family. In terms of assembly, homodimer. Requires Mg(2+) as cofactor.

It carries out the reaction N-(5-phospho-beta-D-ribosyl)anthranilate + diphosphate = 5-phospho-alpha-D-ribose 1-diphosphate + anthranilate. The protein operates within amino-acid biosynthesis; L-tryptophan biosynthesis; L-tryptophan from chorismate: step 2/5. Catalyzes the transfer of the phosphoribosyl group of 5-phosphorylribose-1-pyrophosphate (PRPP) to anthranilate to yield N-(5'-phosphoribosyl)-anthranilate (PRA). This Methylobacterium radiotolerans (strain ATCC 27329 / DSM 1819 / JCM 2831 / NBRC 15690 / NCIMB 10815 / 0-1) protein is Anthranilate phosphoribosyltransferase.